The primary structure comprises 451 residues: Portal protein (451 aa).

The protein belongs to the SPP1-like portal protein family. Homododecamer.

It localises to the virion. Its function is as follows. Forms the portal vertex of the capsid. This portal plays critical roles in head assembly, genome packaging, neck/tail attachment, and genome ejection. The portal protein multimerizes as a single ring-shaped homododecamer arranged around a central channel. Binds to the terminase subunits to form the packaging machine. This is Portal protein from Clostridium phage phiCD119 (strain Clostridium difficile/United States/Govind/2006) (Bacteriophage phiCD119).